The chain runs to 715 residues: uncharacterized protein (715 aa).

A helical membrane pass occupies residues 688-708 (VWKFNPALYSTITNIFLLIIF).

The protein belongs to the plectrovirus ORF1 family.

Its subcellular location is the host membrane. This is an uncharacterized protein from Spiroplasma virus SpV1-R8A2 B (SpV1).